The sequence spans 372 residues: Queuine tRNA-ribosyltransferase (372 aa).

The Proton acceptor role is filled by Asp-92. Substrate-binding positions include 92–96 (DSGGY), Asp-146, Gln-188, and Gly-215. Residues 246-252 (GIGSLRE) are RNA binding. The Nucleophile role is filled by Asp-265. Residues 270-274 (TRLGR) form an RNA binding; important for wobble base 34 recognition region. Zn(2+) is bound by residues Cys-303, Cys-305, Cys-308, and His-334.

It belongs to the queuine tRNA-ribosyltransferase family. As to quaternary structure, homodimer. Within each dimer, one monomer is responsible for RNA recognition and catalysis, while the other monomer binds to the replacement base PreQ1. Zn(2+) serves as cofactor.

The enzyme catalyses 7-aminomethyl-7-carbaguanine + guanosine(34) in tRNA = 7-aminomethyl-7-carbaguanosine(34) in tRNA + guanine. Its pathway is tRNA modification; tRNA-queuosine biosynthesis. Its function is as follows. Catalyzes the base-exchange of a guanine (G) residue with the queuine precursor 7-aminomethyl-7-deazaguanine (PreQ1) at position 34 (anticodon wobble position) in tRNAs with GU(N) anticodons (tRNA-Asp, -Asn, -His and -Tyr). Catalysis occurs through a double-displacement mechanism. The nucleophile active site attacks the C1' of nucleotide 34 to detach the guanine base from the RNA, forming a covalent enzyme-RNA intermediate. The proton acceptor active site deprotonates the incoming PreQ1, allowing a nucleophilic attack on the C1' of the ribose to form the product. After dissociation, two additional enzymatic reactions on the tRNA convert PreQ1 to queuine (Q), resulting in the hypermodified nucleoside queuosine (7-(((4,5-cis-dihydroxy-2-cyclopenten-1-yl)amino)methyl)-7-deazaguanosine). This chain is Queuine tRNA-ribosyltransferase, found in Prochlorococcus marinus (strain MIT 9211).